A 185-amino-acid polypeptide reads, in one-letter code: Large ribosomal subunit protein uL5m (185 aa).

The protein belongs to the universal ribosomal protein uL5 family. As to quaternary structure, component of the mitochondrial ribosome large subunit.

Its subcellular location is the mitochondrion. The sequence is that of Large ribosomal subunit protein uL5m (RPL5) from Arabidopsis thaliana (Mouse-ear cress).